The sequence spans 204 residues: Urease accessory protein UreG (204 aa).

12 to 19 (GPVGSGKT) contributes to the GTP binding site.

This sequence belongs to the SIMIBI class G3E GTPase family. UreG subfamily. In terms of assembly, homodimer. UreD, UreF and UreG form a complex that acts as a GTP-hydrolysis-dependent molecular chaperone, activating the urease apoprotein by helping to assemble the nickel containing metallocenter of UreC. The UreE protein probably delivers the nickel.

It localises to the cytoplasm. In terms of biological role, facilitates the functional incorporation of the urease nickel metallocenter. This process requires GTP hydrolysis, probably effectuated by UreG. The protein is Urease accessory protein UreG of Pseudomonas fluorescens (strain Pf0-1).